Reading from the N-terminus, the 612-residue chain is Poly(A) RNA polymerase, mitochondrial (612 aa).

A mitochondrion-targeting transit peptide spans 1–57; that stretch reads MNSLVRRSAQQLSLWRTYCIKHNASEAASPGRNAGRPNYEEFIGRHQRQAQCSIVVQ. Residues 83-89 and 228-229 each bind ATP; these read YCVRQDE and GC. Mg(2+)-binding residues include Asp-230 and Asp-232. Positions 427–463 constitute a PAP-associated domain; it reads SLSELLLQFFEFYSQFDFHNRAISLNEGKPLSKPDHS. Disordered stretches follow at residues 555 to 574 and 588 to 612; these read AGAT…KSAS and SELK…RRSR.

Belongs to the DNA polymerase type-B-like family. It depends on Mg(2+) as a cofactor. Mn(2+) is required as a cofactor.

Its subcellular location is the mitochondrion. The catalysed reaction is RNA(n) + ATP = RNA(n)-3'-adenine ribonucleotide + diphosphate. Its function is as follows. Polymerase that creates the 3' poly(A) tail of mitochondrial transcripts. This is not required for transcript stability or translation but may maintain mRNA integrity by protecting 3' termini from degradation. This Drosophila melanogaster (Fruit fly) protein is Poly(A) RNA polymerase, mitochondrial.